Here is a 1012-residue protein sequence, read N- to C-terminus: Formate dehydrogenase 2 subunit alpha (cytochrome c-553) (1012 aa).

A signal peptide (tat-type signal) is located at residues 1-33; it reads MKTTRRSFLKLVGVSVVGLSLGQLGFDLEDAQA. Residues 43–99 form the 4Fe-4S Mo/W bis-MGD-type domain; it reads AKEVGTVCPFCSVCCQVIAYVRNGKLVSTEGDPDFPVNEGALCAKGAALFSMYTNPH. Cys50, Cys53, Cys57, and Cys85 together coordinate [4Fe-4S] cluster. Sec189 is a binding site for W-bis(molybdopterin guanine dinucleotide). Position 189 (Sec189) is a non-standard amino acid, selenocysteine. Positions 389, 391, 394, 424, and 426 each coordinate Ca(2+).

The protein belongs to the prokaryotic molybdopterin-containing oxidoreductase family. In terms of assembly, heterotrimer of cytochrome c3 FDH2C and formate dehydrogenase FDH2 alpha and beta subunits that forms the FdhABC(3) complex. It depends on [4Fe-4S] cluster as a cofactor. W-bis(molybdopterin guanine dinucleotide) serves as cofactor. In terms of processing, predicted to be exported by the Tat system. The position of the signal peptide cleavage has not been experimentally proven.

The protein localises to the periplasm. It carries out the reaction 2 Fe(III)-[cytochrome c553] + formate = 2 Fe(II)-[cytochrome c553] + CO2 + H(+). Alpha chain of the formate dehydrogenase (FDH) that catalyzes the reversible two-electron oxidation of formate to carbon dioxide. The alpha subunit of formate dehydrogenase forms the active site. This chain is Formate dehydrogenase 2 subunit alpha (cytochrome c-553), found in Nitratidesulfovibrio vulgaris (strain ATCC 29579 / DSM 644 / CCUG 34227 / NCIMB 8303 / VKM B-1760 / Hildenborough) (Desulfovibrio vulgaris).